The primary structure comprises 246 residues: Ribosomal RNA small subunit methyltransferase J (246 aa).

S-adenosyl-L-methionine is bound by residues 115-116 (ER) and Asp169.

The protein belongs to the methyltransferase superfamily. RsmJ family.

The protein resides in the cytoplasm. The enzyme catalyses guanosine(1516) in 16S rRNA + S-adenosyl-L-methionine = N(2)-methylguanosine(1516) in 16S rRNA + S-adenosyl-L-homocysteine + H(+). In terms of biological role, specifically methylates the guanosine in position 1516 of 16S rRNA. The chain is Ribosomal RNA small subunit methyltransferase J from Buchnera aphidicola subsp. Acyrthosiphon pisum (strain 5A).